The chain runs to 31 residues: Jingzhaotoxin F7-15.33 (31 aa).

3 cysteine pairs are disulfide-bonded: Cys2–Cys16, Cys9–Cys21, and Cys15–Cys28.

The protein belongs to the neurotoxin 10 (Hwtx-1) family. In terms of tissue distribution, expressed by the venom gland.

The protein resides in the secreted. Functionally, probable ion channel inhibitor. In Chilobrachys guangxiensis (Chinese earth tiger tarantula), this protein is Jingzhaotoxin F7-15.33.